The chain runs to 462 residues: MEDSNTNKDINTNITNDDDDNKNINNNNNNTEEDVTVERILERKQKERESKLASMMSHYHQKYSSPSSLLSSPISSNDNNNNNNNNNNESFDINNTSYNGQDDQDEMDDFESEEYKQILLKRKAALAAKKKESLAEQMKKYNQQYDSIISGVNTILSPPPSSTTSNSSTSNNSSLNVSPVLFSTTSSSKLQSLNNNTSPSTSSSNLIDSTNVQTTSTTTAATSTSTQFTNTNINTNSNTLIENSLKISNENNNELNEQLQQQFILQQEQLREQEELKEKLQQQEIERMQTERKERELQQQKELIKNATLDNQQQQQQQPQLELQQQQSQPQQPILLPPLIFETNDIPLLTNVGFATLKNIECNAIKCSEEVVLLTKTLHQSLSTITKISIELFETFNGSTEVTCNAIGYSVNETKTMIDKCFELNNHTKSVISLHQKIKTVRDQLDKFDQIIHNAIKQMNKT.

The disordered stretch occupies residues 1–108 (MEDSNTNKDI…NGQDDQDEMD (108 aa)). The segment covering 36–51 (TVERILERKQKERESK) has biased composition (basic and acidic residues). Residues 64–95 (SSPSSLLSSPISSNDNNNNNNNNNNESFDINN) are compositionally biased toward low complexity. Positions 119–150 (LLKRKAALAAKKKESLAEQMKKYNQQYDSIIS) form a coiled coil. The tract at residues 188–208 (SKLQSLNNNTSPSTSSSNLID) is disordered. Low complexity predominate over residues 190–208 (LQSLNNNTSPSTSSSNLID).

This is an uncharacterized protein from Dictyostelium discoideum (Social amoeba).